Here is a 509-residue protein sequence, read N- to C-terminus: 3-isopropylmalate dehydratase large subunit, chloroplastic (509 aa).

Residues 1–24 are compositionally biased toward low complexity; it reads MASVISSSPFLCKSSSKSDLGISS. The interval 1 to 25 is disordered; sequence MASVISSSPFLCKSSSKSDLGISSF. The transit peptide at 1–47 directs the protein to the chloroplast; the sequence is MASVISSSPFLCKSSSKSDLGISSFPKSSQISIHRCQKKSISRKIVS. Residues Cys376, Cys445, and Cys448 each contribute to the [4Fe-4S] cluster site.

It belongs to the aconitase/IPM isomerase family. As to quaternary structure, heterodimer of the large LEUC/IIL1 subunit and the small LEUD (SSU1, SSU2 or SSU3) subunits. Requires [4Fe-4S] cluster as cofactor. In terms of tissue distribution, expressed in roots, leaves, stems and flowers. Expressed at low levels in siliques.

The protein resides in the plastid. Its subcellular location is the chloroplast stroma. The catalysed reaction is (2R,3S)-3-isopropylmalate = (2S)-2-isopropylmalate. The enzyme catalyses a 2-(omega-methylsulfanyl)alkylmalate = a 2-(omega-methylsulfanyl)alkylmaleate + H2O. It catalyses the reaction 2-(3-methylsulfanyl)propylmalate = 2-(2-methylsulfanyl)propylmaleate + H2O. It carries out the reaction a 3-(omega-methylsulfanyl)alkylmalate = a 2-(omega-methylsulfanyl)alkylmaleate + H2O. The catalysed reaction is 2-(2-methylsulfanyl)ethylmalate = 2-(2-methylsulfanyl)ethylmaleate + H2O. The enzyme catalyses 3-(2-methylsulfanyl)ethylmalate = 2-(2-methylsulfanyl)ethylmaleate + H2O. It catalyses the reaction 3-(3-methylsulfanyl)propylmalate = 2-(2-methylsulfanyl)propylmaleate + H2O. Its pathway is amino-acid biosynthesis; L-leucine biosynthesis; L-leucine from 3-methyl-2-oxobutanoate: step 2/4. Functionally, catalyzes the isomerization between 2-isopropylmalate and 3-isopropylmalate, via the formation of 2-isopropylmaleate. Functions in both the biosynthesis of leucine and in the methionine chain elongation pathway of aliphatic glucosinolate formation. The protein is 3-isopropylmalate dehydratase large subunit, chloroplastic of Arabidopsis thaliana (Mouse-ear cress).